A 434-amino-acid chain; its full sequence is Nicotinate phosphoribosyltransferase (434 aa).

The residue at position 242 (His242) is a Phosphohistidine; by autocatalysis.

This sequence belongs to the NAPRTase family. Post-translationally, transiently phosphorylated on a His residue during the reaction cycle. Phosphorylation strongly increases the affinity for substrates and increases the rate of nicotinate D-ribonucleotide production. Dephosphorylation regenerates the low-affinity form of the enzyme, leading to product release.

The catalysed reaction is nicotinate + 5-phospho-alpha-D-ribose 1-diphosphate + ATP + H2O = nicotinate beta-D-ribonucleotide + ADP + phosphate + diphosphate. Its pathway is cofactor biosynthesis; NAD(+) biosynthesis; nicotinate D-ribonucleotide from nicotinate: step 1/1. Functionally, catalyzes the synthesis of beta-nicotinate D-ribonucleotide from nicotinate and 5-phospho-D-ribose 1-phosphate at the expense of ATP. In Brucella abortus (strain S19), this protein is Nicotinate phosphoribosyltransferase.